Here is a 48-residue protein sequence, read N- to C-terminus: Sperm protamine P1 (48 aa).

The protein belongs to the protamine P1 family. Testis.

Its subcellular location is the nucleus. It is found in the chromosome. Functionally, protamines substitute for histones in the chromatin of sperm during the haploid phase of spermatogenesis. They compact sperm DNA into a highly condensed, stable and inactive complex. The chain is Sperm protamine P1 (PRM1) from Murina cyclotis (Round-eared tube-nosed bat).